Here is a 218-residue protein sequence, read N- to C-terminus: Molybdenum cofactor guanylyltransferase (218 aa).

GTP is bound by residues 16–18, lysine 28, asparagine 56, aspartate 74, and aspartate 109; that span reads LAG. Residue aspartate 109 participates in Mg(2+) binding.

Belongs to the MobA family. As to quaternary structure, monomer. It depends on Mg(2+) as a cofactor.

The protein localises to the cytoplasm. It catalyses the reaction Mo-molybdopterin + GTP + H(+) = Mo-molybdopterin guanine dinucleotide + diphosphate. Its function is as follows. Transfers a GMP moiety from GTP to Mo-molybdopterin (Mo-MPT) cofactor (Moco or molybdenum cofactor) to form Mo-molybdopterin guanine dinucleotide (Mo-MGD) cofactor. This Sinorhizobium fredii (strain NBRC 101917 / NGR234) protein is Molybdenum cofactor guanylyltransferase.